We begin with the raw amino-acid sequence, 1770 residues long: Transposon Ty2-DR3 Gag-Pol polyprotein (1770 aa).

Polar residues-rich tracts occupy residues M1 to H11, A19 to N39, K49 to T60, V366 to K390, I399 to V408, and E415 to Q435. Disordered stretches follow at residues M1 to G89 and S355 to E449. The segment at E295–H397 is RNA-binding. Residue D457 is the For protease activity; shared with dimeric partner of the active site. The interval N579–C636 is integrase-type zinc finger-like. The 176-residue stretch at E656–P831 folds into the Integrase catalytic domain. D667 and D732 together coordinate Mg(2+). Disordered stretches follow at residues G1005–L1038 and G1057–E1205. Polar residues-rich tracts occupy residues E1009–R1024 and Q1065–S1082. The Bipartite nuclear localization signal motif lies at K1193–R1227. Residues N1353 to Q1491 enclose the Reverse transcriptase Ty1/copia-type domain. Residues D1361, D1442, D1443, D1625, E1667, and D1700 each contribute to the Mg(2+) site. The RNase H Ty1/copia-type domain occupies D1625–K1767.

As to quaternary structure, the capsid protein forms a homotrimer, from which the VLPs are assembled. The protease is a homodimer, whose active site consists of two apposed aspartic acid residues. Initially, virus-like particles (VLPs) are composed of the structural unprocessed proteins Gag and Gag-Pol, and also contain the host initiator methionine tRNA (tRNA(i)-Met) which serves as a primer for minus-strand DNA synthesis, and a dimer of genomic Ty RNA. Processing of the polyproteins occurs within the particle and proceeds by an ordered pathway, called maturation. First, the protease (PR) is released by autocatalytic cleavage of the Gag-Pol polyprotein, and this cleavage is a prerequisite for subsequent processing at the remaining sites to release the mature structural and catalytic proteins. Maturation takes place prior to the RT reaction and is required to produce transposition-competent VLPs.

The protein resides in the cytoplasm. It localises to the nucleus. The catalysed reaction is DNA(n) + a 2'-deoxyribonucleoside 5'-triphosphate = DNA(n+1) + diphosphate. The enzyme catalyses Endonucleolytic cleavage to 5'-phosphomonoester.. In terms of biological role, capsid protein (CA) is the structural component of the virus-like particle (VLP), forming the shell that encapsulates the retrotransposons dimeric RNA genome. The particles are assembled from trimer-clustered units and there are holes in the capsid shells that allow for the diffusion of macromolecules. CA also has nucleocapsid-like chaperone activity, promoting primer tRNA(i)-Met annealing to the multipartite primer-binding site (PBS), dimerization of Ty2 RNA and initiation of reverse transcription. Functionally, the aspartyl protease (PR) mediates the proteolytic cleavages of the Gag and Gag-Pol polyproteins after assembly of the VLP. Reverse transcriptase/ribonuclease H (RT) is a multifunctional enzyme that catalyzes the conversion of the retro-elements RNA genome into dsDNA within the VLP. The enzyme displays a DNA polymerase activity that can copy either DNA or RNA templates, and a ribonuclease H (RNase H) activity that cleaves the RNA strand of RNA-DNA heteroduplexes during plus-strand synthesis and hydrolyzes RNA primers. The conversion leads to a linear dsDNA copy of the retrotransposon that includes long terminal repeats (LTRs) at both ends. Its function is as follows. Integrase (IN) targets the VLP to the nucleus, where a subparticle preintegration complex (PIC) containing at least integrase and the newly synthesized dsDNA copy of the retrotransposon must transit the nuclear membrane. Once in the nucleus, integrase performs the integration of the dsDNA into the host genome. This chain is Transposon Ty2-DR3 Gag-Pol polyprotein (TY2B-DR3), found in Saccharomyces cerevisiae (strain ATCC 204508 / S288c) (Baker's yeast).